The following is a 3589-amino-acid chain: D-lysergyl-peptide-synthetase subunit 1 (3589 aa).

Positions 344 to 742 (NCHSRPDSLA…IGRKDLQVKV (399 aa)) are adenylation (A) domain 1. Residues 883 to 952 (VERRLQLLFA…KLRDLAAASS (70 aa)) enclose the Carrier 1 domain. Position 915 is an O-(pantetheine 4'-phosphoryl)serine (serine 915). Positions 995–1380 (EDIYPCTSLQ…SQFQHILTQI (386 aa)) are condensation (C) domain 1. The segment at 1424-1826 (QAKAQMQPEA…RRKDSQVKLR (403 aa)) is adenylation (A) domain 2. The Carrier 2 domain maps to 1974–2042 (LERELQKIWA…TIEKLAAAAV (69 aa)). Serine 2006 is subject to O-(pantetheine 4'-phosphoryl)serine. Positions 2087-2509 (VEDIYPCSPI…IEMLDEEHRS (423 aa)) are condensation (C) domain 2. An adenylation (A) domain 3 region spans residues 2534-2929 (CLESPESPAI…GRKDDQVKIR (396 aa)). Residues 3064-3132 (LETRLQELVG…RLSELAVVLN (69 aa)) enclose the Carrier 3 domain. An O-(pantetheine 4'-phosphoryl)serine modification is found at serine 3096. Residues 3187-3585 (TNFIALHFSQ…TYPESLVSEL (399 aa)) are cyclization (Cyc) domain.

It belongs to the NRP synthetase family.

It participates in alkaloid biosynthesis; ergot alkaloid biosynthesis. D-lysergyl-peptide-synthetase subunit 1; part of the gene cluster that mediates the biosynthesis of fungal ergot alkaloid ergovaline, the predominant ergopeptine product in E.festucae var. lolii. DmaW catalyzes the first step of ergot alkaloid biosynthesis by condensing dimethylallyl diphosphate (DMAP) and tryptophan to form 4-dimethylallyl-L-tryptophan. The second step is catalyzed by the methyltransferase easF that methylates 4-dimethylallyl-L-tryptophan in the presence of S-adenosyl-L-methionine, resulting in the formation of 4-dimethylallyl-L-abrine. The catalase easC and the FAD-dependent oxidoreductase easE then transform 4-dimethylallyl-L-abrine to chanoclavine-I which is further oxidized by easD in the presence of NAD(+), resulting in the formation of chanoclavine-I aldehyde. Agroclavine dehydrogenase easG then mediates the conversion of chanoclavine-I aldehyde to agroclavine via a non-enzymatic adduct reaction: the substrate is an iminium intermediate that is formed spontaneously from chanoclavine-I aldehyde in the presence of glutathione. The presence of easA is not required to complete this reaction. Further conversion of agroclavine to paspalic acid is a two-step process involving oxidation of agroclavine to elymoclavine and of elymoclavine to paspalic acid, the second step being performed by the elymoclavine oxidase cloA. Paspalic acid is then further converted to D-lysergic acid. Ergovaline is assembled from D-lysergic acid and three different amino acids by the D-lysergyl-peptide-synthetase composed of a monomudular (lpsB) and a trimodular (lpsA) nonribosomal peptide synthetase subunit. This Epichloe festucae var. lolii (Neotyphodium lolii) protein is D-lysergyl-peptide-synthetase subunit 1.